The chain runs to 73 residues: Guanine nucleotide-binding protein G(I)/G(S)/G(O) subunit gamma-11 (73 aa).

Residues 54-73 form a disordered region; that stretch reads VKGIPEDKNPFKEKGSCIIS. Cys70 carries the cysteine methyl ester modification. Cys70 carries the S-farnesyl cysteine lipid modification. Residues 71–73 constitute a propeptide, removed in mature form; the sequence is IIS.

Belongs to the G protein gamma family. G proteins are composed of 3 units, alpha, beta and gamma. Interacts with beta-1 and beta-3, but not with beta-2.

Its subcellular location is the cell membrane. Its function is as follows. Guanine nucleotide-binding proteins (G proteins) are involved as a modulator or transducer in various transmembrane signaling systems. The beta and gamma chains are required for the GTPase activity, for replacement of GDP by GTP, and for G protein-effector interaction. The sequence is that of Guanine nucleotide-binding protein G(I)/G(S)/G(O) subunit gamma-11 (GNG11) from Bos taurus (Bovine).